Here is a 220-residue protein sequence, read N- to C-terminus: Ribosomal RNA small subunit methyltransferase G 1 (220 aa).

S-adenosyl-L-methionine is bound by residues G79, F84, and R150.

This sequence belongs to the methyltransferase superfamily. RNA methyltransferase RsmG family.

The protein resides in the cytoplasm. The catalysed reaction is guanosine(527) in 16S rRNA + S-adenosyl-L-methionine = N(7)-methylguanosine(527) in 16S rRNA + S-adenosyl-L-homocysteine. In terms of biological role, specifically methylates the N7 position of guanine in position 527 of 16S rRNA. This is Ribosomal RNA small subunit methyltransferase G 1 from Syntrophobacter fumaroxidans (strain DSM 10017 / MPOB).